Here is a 293-residue protein sequence, read N- to C-terminus: Bifunctional protein FolD (293 aa).

NADP(+) is bound by residues 169–171, Thr196, and Val237; that span reads GRG.

Belongs to the tetrahydrofolate dehydrogenase/cyclohydrolase family. As to quaternary structure, homodimer.

It carries out the reaction (6R)-5,10-methylene-5,6,7,8-tetrahydrofolate + NADP(+) = (6R)-5,10-methenyltetrahydrofolate + NADPH. It catalyses the reaction (6R)-5,10-methenyltetrahydrofolate + H2O = (6R)-10-formyltetrahydrofolate + H(+). It functions in the pathway one-carbon metabolism; tetrahydrofolate interconversion. Functionally, catalyzes the oxidation of 5,10-methylenetetrahydrofolate to 5,10-methenyltetrahydrofolate and then the hydrolysis of 5,10-methenyltetrahydrofolate to 10-formyltetrahydrofolate. The sequence is that of Bifunctional protein FolD from Leifsonia xyli subsp. xyli (strain CTCB07).